The sequence spans 523 residues: MLNVPSQSFPAPSSQQRVAAIGRSKVPLKPGRSLMDWIRLTKSGKDLTGLKGRLIDVTEEELAQHNKKEDCWICIRGMVYNITPYMEYHPGGEEELMKAAGRDGTDLFDQVHRWVNYESMLKECLIGRMAIKHVSISKEVTSVENKMNKHLNGSVASSKMSRTSSKESHPWYDWFQTESLVTVAVYTKMKNVCSELVIVDHLENVLRGEIIIGDYSYLLHSELSHPVQKDIEVKVSATAGKIEIKMKKKEPVSWKSLGQPMDGHNSFLKHSQRGLYYRKCRLASKTDINYNTKLFCVQLPQGCHLQVPVGHHIYLKMNISGVDIVKPYTPVASCLLPDAQYSTFCNKQCLYLMIKIYPNGSITPHLENLTVGDYISISNPQGTFSSFQIENVMDVFLVAAGTGITPMIRLLQHVLTCVSSLRKAKLIFFNKKEEDILWKEQVEELSLADKRFEAQLILSEPSVKWTGYRGQISYSLLNESILRTEEGSKILICICGPNAFVDQGISFLQDLGFSKEEVFAFRE.

A Cytochrome b5 heme-binding domain is found at 54-130; that stretch reads LIDVTEEELA…LKECLIGRMA (77 aa). His89 and His112 together coordinate heme. The CS domain maps to 167 to 258; the sequence is ESHPWYDWFQ…KEPVSWKSLG (92 aa). The region spanning 275–387 is the FAD-binding FR-type domain; the sequence is LYYRKCRLAS…SNPQGTFSSF (113 aa). Residues 367-382 and 394-426 each bind FAD; these read ENLTVGDYISISNPQG and DVFLVAAGTGITPMIRLLQHVLTCVSSLRKAKL.

This sequence belongs to the flavoprotein pyridine nucleotide cytochrome reductase family. The cofactor is FAD.

It localises to the endoplasmic reticulum. It carries out the reaction 2 Fe(III)-[cytochrome b5] + NADH = 2 Fe(II)-[cytochrome b5] + NAD(+) + H(+). In terms of biological role, NADH-cytochrome b5 reductase involved in endoplasmic reticulum stress response pathway. The sequence is that of Cytochrome b5 reductase 4 (cyb5r4) from Xenopus tropicalis (Western clawed frog).